The following is a 1697-amino-acid chain: MNFFRFPVQLQLLISTVLGPCLGLEFTGLQGQWARYLRWDASTRSDLSFQFKTDVSTALILYFDDGGFCDFLQLMVVEGKLQLQFSIDCAETTVVSDKRVNDSSWHSATLSRYNLRTVLGLDGVSKWAEVRPLRQYMKIVSDLFLGGVPQDIRISVLTLPTVKDLPPFKGIIRELKYNSKEPILLSSQRVRMDIEGICMENPCENGGTCSVVDGEPLCDCSKTEYVGRFCNEEANNIPGFAHMMMADQAKGKAREENVATFRGSEFFCYDLSQNPIQSSSDEITLSFKTWQRNGLILHTGKSADYVNLALKDGAVSLVINLGSGAFEAIVEPVNGKFNDNSWHDVKVTRNLRQHSGIGHAMVNKLHCLVTISVDGILTTTGYTQEDYTMLGSDDFFYVGGSPSTADLPGSPVSNNFMGCLKEVVYKNNDIRLELSRLARIVDPKMKIQGDVVFKCENVATLDPISFETPEAYISLPKWNTKRMGSISFDFRTTEPNGLILFTHGKPQERKDARSQKNTKVDFFAVELLDGSLYLLLDMGSGTIKVKATQNKVNDGAWYHVDIQRDGRSGTISVNSRRTPFTASGENEILDLEGDMYLGGLPDSRGSLILPTELWTAMLNYGYVGCIRDLFIDGRSKDIRQIAEAQNGAGIKPSCNKMSGKQCDSYPCKNKGLCKEGWNRFICDCTGTGYWSRTCEREASILSYDGSMYMKVVMPTVMHTEAEDVSLRFMSQRAYGLLMATTSRDSADTLRLELDGSRVKLTVNLDCIRINCNSSKGPETLYAGQKLNDNEWHTVRVIRRGKSYKLTVDDDVAEGQMVGDHTRLEFHNIETGVMTERRFVSMIPSSFIGHLQSLKFNGLLYIDLCKNGDIDFCELNARFGMRSIIADPVTFKSKNSYLSLATLQAYTSMHLFFQFKTTSADGFILFNSGDGSDFIAVELVKGYIHYVFNLGNGPNVIKGNSERALHDNQWHNVVITRDNSNVHTLKVDAKAVSQVVNGAKNLDLKGDLFIAGLGPNMYNNLPKLVASREGFKGCLASVDLNGRLPDLINDALFRSGQIERGCEVGFTKADLKGPSTTCQEDSCANMGICIQQWENYTCDCSMTSYTGTHCNDPGTTYIFGKGGGLISFNWPANERPSTRTDRLTVGFSTSLKDGILIRIDSAPGLGDYLMLHIEQGKIGVTFNIGTADITVQESSTAVNDGKYHVVRFTRNGGNATLQVDNWAINEHFPSGNSDNERIQMANKKIPFKYARPVEEWLQEKGRQLTIFNTQATITIGGSDRKRPFQGQLSGLYYNGLKVLNMAAQGNPNIKINGSVRLVGEVPAAGSARTTALPPEMSTAFIETTTTMSTTTTRKHRTPPTIQTTDDMVSSAECSSDDEDFAECEGHAGGLGGELVFPVIVKDPLELPSVATRTPSIPFPPTLTIIETTKESLSMATEAGVPCLSDGGSDDCGDDDDDDDDDGLMISGYGSGEAYDSNLPPTDDEDFYTTFSLVTDKTLSSSTFEGGYKAHAPKWGSKDFRPNKVFDSGRTTTASFSPKLSRSTTTSTPPKLPAGKMNHRELKPQPDIVLLPLPTSYEVDNTKMKSPLITSPMFRNVPTAIPTEPGIRRVPGASEVVRESSSTTGMVVGIVAAAALCILILLYAMYKYRNRDEGSYQVDETRNYITNSAQSNGAVMKDKQQSTKSGNKKQKNKDKEYYV.

A signal peptide spans 1 to 23; that stretch reads MNFFRFPVQLQLLISTVLGPCLG. One can recognise a Laminin G-like 1 domain in the interval 24-198; the sequence is LEFTGLQGQW…RVRMDIEGIC (175 aa). Over 24–1622 the chain is Extracellular; the sequence is LEFTGLQGQW…EVVRESSSTT (1599 aa). The EGF-like 1 domain maps to 194 to 231; sequence IEGICMENPCENGGTCSVVDGEPLCDCSKTEYVGRFCN. Disulfide bonds link C198–C209, C203–C218, and C220–C230. Laminin G-like domains follow at residues 258–455 and 462–654; these read VATF…VFKC and DPIS…KPSC. Ca(2+) contacts are provided by D304, L321, and M389. 5 disulfide bridges follow: C419/C455, C625/C654, C662/C673, C667/C682, and C684/C694. The 38-residue stretch at 658-695 folds into the EGF-like 2 domain; the sequence is SGKQCDSYPCKNKGLCKEGWNRFICDCTGTGYWSRTCE. 2 consecutive Laminin G-like domains span residues 700–872 and 886–1061; these read ILSY…IDFC and DPVT…ERGC. Intrachain disulfides connect C1033–C1061, C1077–C1088, C1082–C1097, and C1099–C1109. The EGF-like 3 domain occupies 1073–1110; it reads PSTTCQEDSCANMGICIQQWENYTCDCSMTSYTGTHCN. The region spanning 1114 to 1314 is the Laminin G-like 6 domain; that stretch reads TTYIFGKGGG…NPNIKINGSV (201 aa). 3 disordered regions span residues 1345-1366, 1442-1479, and 1520-1557; these read TMST…TDDM, LSDG…NLPP, and PNKV…KMNH. Residues 1446–1461 are compositionally biased toward acidic residues; it reads GSDDCGDDDDDDDDDG. Over residues 1527–1547 the composition is skewed to polar residues; that stretch reads GRTTTASFSPKLSRSTTTSTP. A helical transmembrane segment spans residues 1623-1643; the sequence is GMVVGIVAAAALCILILLYAM. The Cytoplasmic portion of the chain corresponds to 1644 to 1697; the sequence is YKYRNRDEGSYQVDETRNYITNSAQSNGAVMKDKQQSTKSGNKKQKNKDKEYYV. Residues 1665–1697 are disordered; it reads NSAQSNGAVMKDKQQSTKSGNKKQKNKDKEYYV.

It belongs to the neurexin family.

Its subcellular location is the membrane. In terms of biological role, neuronal cell surface protein that may be involved in cell recognition and cell adhesion. This is Neurexin-3a (nrxn3a) from Danio rerio (Zebrafish).